Consider the following 265-residue polypeptide: Ribosomal RNA small subunit methyltransferase G (265 aa).

3 residues coordinate S-adenosyl-L-methionine: glycine 75, leucine 80, and arginine 145. Positions 212 to 265 (RAVRSSQRTRAESRGGRGDGERHDGRQVRRTSRDSLRSREVGRDQPTRGQSRST) are disordered. Residues 220-257 (TRAESRGGRGDGERHDGRQVRRTSRDSLRSREVGRDQP) show a composition bias toward basic and acidic residues.

The protein belongs to the methyltransferase superfamily. RNA methyltransferase RsmG family.

Its subcellular location is the cytoplasm. Functionally, specifically methylates the N7 position of guanine in position 518 of 16S rRNA. In Frankia casuarinae (strain DSM 45818 / CECT 9043 / HFP020203 / CcI3), this protein is Ribosomal RNA small subunit methyltransferase G.